Here is a 259-residue protein sequence, read N- to C-terminus: Bis(5'-nucleosyl)-tetraphosphatase, symmetrical (259 aa).

Belongs to the Ap4A hydrolase family.

The enzyme catalyses P(1),P(4)-bis(5'-adenosyl) tetraphosphate + H2O = 2 ADP + 2 H(+). Functionally, hydrolyzes diadenosine 5',5'''-P1,P4-tetraphosphate to yield ADP. The chain is Bis(5'-nucleosyl)-tetraphosphatase, symmetrical (apaH) from Klebsiella aerogenes (Enterobacter aerogenes).